The sequence spans 350 residues: GTPase Obg (350 aa).

Residues 1 to 159 (MKFIDEAKIT…WELALELKVL (159 aa)) enclose the Obg domain. The disordered stretch occupies residues 17–43 (GDGSASFRREKYIPKGGPDGGDGGRGG). The span at 33 to 43 (GPDGGDGGRGG) shows a compositional bias: gly residues. Residues 160 to 334 (ADVGLLGMPN…LTYAVMDYLG (175 aa)) form the OBG-type G domain. GTP-binding positions include 166-173 (GMPNAGKS), 191-195 (FTTLA), 213-216 (DIPG), 284-287 (NKLD), and 315-317 (SAL). Residues Ser-173 and Thr-193 each contribute to the Mg(2+) site.

Belongs to the TRAFAC class OBG-HflX-like GTPase superfamily. OBG GTPase family. As to quaternary structure, monomer. Mg(2+) serves as cofactor.

The protein resides in the cytoplasm. Functionally, an essential GTPase which binds GTP, GDP and possibly (p)ppGpp with moderate affinity, with high nucleotide exchange rates and a fairly low GTP hydrolysis rate. Plays a role in control of the cell cycle, stress response, ribosome biogenesis and in those bacteria that undergo differentiation, in morphogenesis control. This Thiobacillus denitrificans (strain ATCC 25259 / T1) protein is GTPase Obg.